The following is a 129-amino-acid chain: Glycine cleavage system H protein (129 aa).

Residues 24 to 106 (IAVIGISAYA…YEQGWLLKVQ (83 aa)) enclose the Lipoyl-binding domain. An N6-lipoyllysine modification is found at Lys65.

The protein belongs to the GcvH family. The glycine cleavage system is composed of four proteins: P, T, L and H. (R)-lipoate serves as cofactor.

Functionally, the glycine cleavage system catalyzes the degradation of glycine. The H protein shuttles the methylamine group of glycine from the P protein to the T protein. This Synechococcus elongatus (strain ATCC 33912 / PCC 7942 / FACHB-805) (Anacystis nidulans R2) protein is Glycine cleavage system H protein.